Reading from the N-terminus, the 405-residue chain is CRS2-associated factor 1, mitochondrial (405 aa).

Residues Met1–Arg20 constitute a mitochondrion transit peptide. The disordered stretch occupies residues Arg32–Gly75. CRM domains follow at residues Ala157–Lys255 and Asp277–Asp373. Positions Ser384 to Thr405 are disordered.

As to quaternary structure, part of large ribonucleo-protein complexes that include group IIB introns.

The protein resides in the mitochondrion. May be involved in the splicing of group IIB introns in mitochondria. This is CRS2-associated factor 1, mitochondrial from Arabidopsis thaliana (Mouse-ear cress).